The chain runs to 310 residues: Glutaminase (310 aa).

Ser67, Asn118, Glu161, Asn168, Tyr192, Tyr244, and Val262 together coordinate substrate.

It belongs to the glutaminase family. As to quaternary structure, homotetramer.

It carries out the reaction L-glutamine + H2O = L-glutamate + NH4(+). The protein is Glutaminase of Legionella pneumophila (strain Paris).